The sequence spans 682 residues: Probable methyltransferase PMT12 (682 aa).

Topologically, residues 1-11 (MKLFLNSNLLR) are cytoplasmic. Residues 12–32 (NSIFFKISAFVLISVACFFLG) form a helical; Signal-anchor for type II membrane protein membrane-spanning segment. At 33–682 (KHWSEDGFRR…KRRKTKGKRA (650 aa)) the chain is on the lumenal side. N-linked (GlcNAc...) asparagine glycans are attached at residues N67, N103, N125, N155, N173, N193, N273, N350, N395, N419, N600, and N625.

The protein belongs to the methyltransferase superfamily.

The protein resides in the golgi apparatus membrane. In Arabidopsis thaliana (Mouse-ear cress), this protein is Probable methyltransferase PMT12.